The sequence spans 503 residues: Glycerol kinase (503 aa).

An ADP-binding site is contributed by T12. ATP is bound by residues T12, T13, and S14. Residue T12 coordinates sn-glycerol 3-phosphate. Position 16 (R16) interacts with ADP. R82, E83, Y134, and D243 together coordinate sn-glycerol 3-phosphate. 5 residues coordinate glycerol: R82, E83, Y134, D243, and Q244. The ADP site is built by T265 and G308. Residues T265, G308, Q312, and G412 each coordinate ATP. ADP is bound at residue G412.

This sequence belongs to the FGGY kinase family.

It carries out the reaction glycerol + ATP = sn-glycerol 3-phosphate + ADP + H(+). The protein operates within polyol metabolism; glycerol degradation via glycerol kinase pathway; sn-glycerol 3-phosphate from glycerol: step 1/1. With respect to regulation, inhibited by fructose 1,6-bisphosphate (FBP). In terms of biological role, key enzyme in the regulation of glycerol uptake and metabolism. Catalyzes the phosphorylation of glycerol to yield sn-glycerol 3-phosphate. The polypeptide is Glycerol kinase (Nitrobacter hamburgensis (strain DSM 10229 / NCIMB 13809 / X14)).